The chain runs to 95 residues: uncharacterized protein (95 aa).

A run of 3 helical transmembrane segments spans residues 3–23 (YTVL…GFSF), 35–55 (ILFL…MMLT), and 63–83 (MLGV…VMII).

The protein resides in the cell membrane. This is an uncharacterized protein from Mycoplasma pneumoniae (strain ATCC 29342 / M129 / Subtype 1) (Mycoplasmoides pneumoniae).